We begin with the raw amino-acid sequence, 1014 residues long: MSTNLANYFAGKKDIENEHVNRNASHESNSKSDVKISGNDNDNDEDMGPSVSMAVQAKNDDDFHKSTFNLKRTRSMGLLDEYIDPTKKLLGRSDDLYDNDNEYYDNSSNNSSSNSSDDDYDDGYQEHSTSVSPPPADNDSYLIPQDDNDVVVEPERHVDYLSHEWKESEISNSWKYIILKKKKRDVDLVNAARLENASWRTWAKARNNLKTVSPEVVNWSKDSDVTWLYGPIVRDSEGNAQSEEEHDLERGYGSDDENSKRISMPTKNSKSIAAAPKPILKKRTVTEIIEDNALWKLNEARKHMTEMKHASVIMDPNGNKNVHDDFDALAAQVNAQYYHYPKESNSSVSLKSQHSDKKDNSTIPNPVGENSNGGGDKGEEDLHLKSALHVQNNRSTAQSNKSILENSTNDRKANLDQNLNSPDNNRFPSSTSSSNRDNENNSMGLSSILTSNPSEKSNKPTKNRHIHFNDRVEQCMALRYPASQSEDDESDDENKQYVDVNNNANVTTINNNRTPLLAIQHKSIPINSATEHLNKNTSDDDTSSQSSSSSHSDDEEHGGLYINARFSRRSDSGVHSPITDNSSVASSTTSRAHVRPIIKLLPDTTLNYGSDEESDNGEFNGYGNAVSHNVNTSRGYDYIYDYNSVYTGDTSSFLPVDSCDIVDVPEGMDLQTAIADDNASNYEFNNAVESKEKHVPQLHKASANNTTRQHGSHMLLYDDDNYSSSSDSEQQFIEDSQYNSSDDEEEEDDDDQEVDDNHDEGLSLRRTLSLGKSGSTNSLYDLAQPSLSSATPQQKNPTNFTGGKTDVDKDAQLAVRPYPLKRNSSSGNFIFNSDSEEESSSEEEQRPLPANSQLVNRSVLKGSVTPANISSQKKKALPKQPKASDSSQSFRIVNNTPSPAEVGASDVAIEGYFSPRNESIKSVVSGGNMMDHQDHSEMDTLAKGFENCHINNASKLKDKKVDSVQTTRKEASLTDSSNESLHKVVQNARGMASKYLHSWKKSDVKPQENGNDSS.

Positions 1–63 are disordered; the sequence is MSTNLANYFA…AVQAKNDDDF (63 aa). N-acetylserine is present on Ser-2. Over residues 11–34 the composition is skewed to basic and acidic residues; the sequence is GKKDIENEHVNRNASHESNSKSDV. Phosphothreonine is present on Thr-73. A Phosphoserine modification is found at Ser-75. 2 disordered regions span residues 90–144 and 236–270; these read LGRS…YLIP and SEGN…KNSK. The segment covering 104-115 has biased composition (low complexity); sequence YDNSSNNSSSNS. Ser-242 and Ser-254 each carry phosphoserine. Positions 247–260 are enriched in basic and acidic residues; that stretch reads DLERGYGSDDENSK. Residues 277–283 carry the Nuclear localization signal motif; sequence KPILKKR. A Phosphoserine modification is found at Ser-311. The disordered stretch occupies residues 340–463; that stretch reads YPKESNSSVS…SEKSNKPTKN (124 aa). Composition is skewed to polar residues over residues 343 to 352, 361 to 370, 389 to 407, and 415 to 455; these read ESNSSVSLKS, STIPNPVGEN, HVQN…LENS, and LDQN…NPSE. A Phosphoserine modification is found at Ser-421. A Phosphotyrosine modification is found at Tyr-480. Ser-490 bears the Phosphoserine mark. 2 disordered regions span residues 531–557 and 570–591; these read EHLN…DEEH and SDSG…TTSR. Residues Ser-570, Ser-572, and Ser-576 each carry the phosphoserine modification. A compositionally biased stretch (polar residues) spans 578–591; that stretch reads ITDNSSVASSTTSR. The short motif at 595-599 is the Nuclear localization signal element; sequence RPIIK. 3 positions are modified to phosphoserine: Ser-610, Ser-614, and Ser-680. Residues 690 to 897 are disordered; that stretch reads SKEKHVPQLH…QSFRIVNNTP (208 aa). The span at 722 to 740 shows a compositional bias: low complexity; sequence YSSSSDSEQQFIEDSQYNS. A compositionally biased stretch (acidic residues) spans 741–758; that stretch reads SDDEEEEDDDDQEVDDNH. Composition is skewed to polar residues over residues 770-802 and 822-833; these read LGKS…NFTG and RNSSSGNFIFNS. The Nuclear localization signal motif lies at 873-879; the sequence is KKKALPK. Residues 884–897 are compositionally biased toward polar residues; the sequence is SDSSQSFRIVNNTP. Position 896 is a phosphothreonine (Thr-896). Ser-898 is modified (phosphoserine). Residues 959–972 show a composition bias toward basic and acidic residues; it reads KKVDSVQTTRKEAS. Residues 959–982 are disordered; sequence KKVDSVQTTRKEASLTDSSNESLH. Ser-980 bears the Phosphoserine mark.

As to quaternary structure, interacts with SAK1.

It localises to the nucleus. In terms of biological role, involved in RNA processing and negative regulation of glucose repression. Regulates the level of two antigens, P43 and P70. Binds to protein phosphatase type 1. Functions with REG2 and SNF1 protein kinase to regulate growth. Might regulate SNF1 directly or indirectly. In Saccharomyces cerevisiae (strain ATCC 204508 / S288c) (Baker's yeast), this protein is Resistance to glucose repression protein 1 (REG1).